Consider the following 62-residue polypeptide: METKKEEYETKGYDTSIVYEFNEYPDARSGRCDNCDYTLFKSSVKGGKFLRECRRCGMKKNI.

This is an uncharacterized protein from Bacillus subtilis (strain 168).